Here is a 200-residue protein sequence, read N- to C-terminus: Peptidyl-tRNA hydrolase (200 aa).

Y15 is a binding site for tRNA. The Proton acceptor role is filled by H20. TRNA-binding residues include F66, N68, and N114.

The protein belongs to the PTH family. As to quaternary structure, monomer.

Its subcellular location is the cytoplasm. The enzyme catalyses an N-acyl-L-alpha-aminoacyl-tRNA + H2O = an N-acyl-L-amino acid + a tRNA + H(+). In terms of biological role, hydrolyzes ribosome-free peptidyl-tRNAs (with 1 or more amino acids incorporated), which drop off the ribosome during protein synthesis, or as a result of ribosome stalling. Its function is as follows. Catalyzes the release of premature peptidyl moieties from peptidyl-tRNA molecules trapped in stalled 50S ribosomal subunits, and thus maintains levels of free tRNAs and 50S ribosomes. This is Peptidyl-tRNA hydrolase from Ralstonia pickettii (strain 12J).